A 986-amino-acid polypeptide reads, in one-letter code: Translation initiation factor IF-2 (986 aa).

The segment at 95 to 394 is disordered; sequence TFVRRDETSA…GRGKHQDQNT (300 aa). Residues 122-182 are compositionally biased toward basic and acidic residues; it reads ELQRREEEAR…EEEAAKKRAA (61 aa). Residues 183–222 are compositionally biased toward low complexity; it reads AEAAAREQAQAAKPAQAAQPAAAKAEPVAAKAAEPAVAKQ. Residues 228–277 are compositionally biased toward basic and acidic residues; sequence ERAAAERAAQREAAKKAEDAARQAAEKARAEQEQIAKRRAAAEAEARAIR. Over residues 320 to 342 the composition is skewed to low complexity; it reads APSRPAAKKPAAAAPAATTTPSA. A compositionally biased stretch (gly residues) spans 371-384; sequence TSGGVDRGWRGGPK. The tr-type G domain maps to 486 to 655; the sequence is PRPPVVTVMG…LLQAEVLELK (170 aa). A G1 region spans residues 495-502; it reads GHVDHGKT. Residue 495-502 coordinates GTP; sequence GHVDHGKT. The tract at residues 520–524 is G2; sequence GITQH. Positions 541 to 544 are G3; the sequence is DTPG. GTP-binding positions include 541–545 and 595–598; these read DTPGH and NKID. Residues 595–598 are G4; the sequence is NKID. Residues 631-633 are G5; that stretch reads SAK.

This sequence belongs to the TRAFAC class translation factor GTPase superfamily. Classic translation factor GTPase family. IF-2 subfamily.

It localises to the cytoplasm. Its function is as follows. One of the essential components for the initiation of protein synthesis. Protects formylmethionyl-tRNA from spontaneous hydrolysis and promotes its binding to the 30S ribosomal subunits. Also involved in the hydrolysis of GTP during the formation of the 70S ribosomal complex. This is Translation initiation factor IF-2 from Paraburkholderia phytofirmans (strain DSM 17436 / LMG 22146 / PsJN) (Burkholderia phytofirmans).